A 307-amino-acid polypeptide reads, in one-letter code: tRNA dimethylallyltransferase (307 aa).

9-16 (GPTAVGKT) contributes to the ATP binding site. 11-16 (TAVGKT) lines the substrate pocket. Residues 34–37 (DSMQ) form an interaction with substrate tRNA region.

It belongs to the IPP transferase family. Monomer. The cofactor is Mg(2+).

The catalysed reaction is adenosine(37) in tRNA + dimethylallyl diphosphate = N(6)-dimethylallyladenosine(37) in tRNA + diphosphate. Its function is as follows. Catalyzes the transfer of a dimethylallyl group onto the adenine at position 37 in tRNAs that read codons beginning with uridine, leading to the formation of N6-(dimethylallyl)adenosine (i(6)A). This is tRNA dimethylallyltransferase from Levilactobacillus brevis (strain ATCC 367 / BCRC 12310 / CIP 105137 / JCM 1170 / LMG 11437 / NCIMB 947 / NCTC 947) (Lactobacillus brevis).